Reading from the N-terminus, the 204-residue chain is uncharacterized protein (204 aa).

As to expression, component of the acid-soluble organic matrix of the aragonitic skeleton (at protein level).

The protein localises to the secreted. This is an uncharacterized protein from Acropora millepora (Staghorn coral).